A 492-amino-acid chain; its full sequence is Argininosuccinate lyase (492 aa).

Belongs to the lyase 1 family. Argininosuccinate lyase subfamily.

It localises to the cytoplasm. It catalyses the reaction 2-(N(omega)-L-arginino)succinate = fumarate + L-arginine. The protein operates within amino-acid biosynthesis; L-arginine biosynthesis; L-arginine from L-ornithine and carbamoyl phosphate: step 3/3. The chain is Argininosuccinate lyase from Methanocorpusculum labreanum (strain ATCC 43576 / DSM 4855 / Z).